Reading from the N-terminus, the 382-residue chain is Gap junction alpha-1 protein (382 aa).

Residues 2–23 (GDWSALGKLLDKVQAYSTAGGK) are Cytoplasmic-facing. Serine 5 is modified (phosphoserine). A helical membrane pass occupies residues 24-44 (VWLSVLFIFRILLLGTAVESA). The Extracellular portion of the chain corresponds to 45 to 76 (WGDEQSAFRCNTQQPGCENVCYDKSFPISHVR). 2 cysteine pairs are disulfide-bonded: cysteine 54–cysteine 192 and cysteine 187–cysteine 198. A helical membrane pass occupies residues 77 to 97 (FWVLQIIFVSVPTLLYLAHVF). Over 98-155 (YVMRKEEKLNKKEEELKVAQTDGVNVEMHLKQIEIKKFKYGIEEHGKVKMRGGLLRTY) the chain is Cytoplasmic. Lysine 144 is covalently cross-linked (Glycyl lysine isopeptide (Lys-Gly) (interchain with G-Cter in SUMO)). Residues 156–176 (IISILFKSVFEVAFLLIQWYI) traverse the membrane as a helical segment. At 177–207 (YGFSLSAVYTCKRDPCPHQVDCFLSRPTEKT) the chain is on the extracellular side. A helical membrane pass occupies residues 208-228 (IFIIFMLVVSLVSLALNIIEL). Over 229–382 (FYVFFKGVKD…SRPRPDDLEI (154 aa)) the chain is Cytoplasmic. Residue lysine 237 forms a Glycyl lysine isopeptide (Lys-Gly) (interchain with G-Cter in SUMO) linkage. The tract at residues 244 to 382 (SDPYHATTGP…SRPRPDDLEI (139 aa)) is interaction with NOV. Tyrosine 247 carries the phosphotyrosine modification. Phosphoserine is present on residues serine 255, serine 257, and serine 262. An interaction with UBQLN4 region spans residues 264 to 382 (KYAYFNGCSS…SRPRPDDLEI (119 aa)). Position 271 is an S-nitrosocysteine (cysteine 271). Threonine 275 is modified (phosphothreonine). Phosphoserine is present on residues serine 306, serine 314, and serine 325. Residues 317 to 332 (QNRMGQAGSTISNSHA) show a composition bias toward polar residues. The tract at residues 317-382 (QNRMGQAGST…SRPRPDDLEI (66 aa)) is disordered. Phosphothreonine is present on threonine 326. A phosphoserine mark is found at serine 328, serine 330, serine 341, and serine 365. Over residues 362–374 (RPSSRASSRASSR) the composition is skewed to low complexity. Phosphoserine; by PKC/PRKCG and PKC/PRKCD is present on serine 368. Serine 369 and serine 373 each carry phosphoserine.

The protein belongs to the connexin family. Alpha-type (group II) subfamily. In terms of assembly, a connexon is composed of a hexamer of connexins. Interacts with CSNK1D. Interacts with RIC1/CIP150. Interacts (via C-terminus) with TJP1. Interacts (via C-terminus) with SRC (via SH3 domain). Interacts (not ubiquitinated) with UBQLN4 (via UBA domain). Interacts with CNST. Interacts with SGSM3. Interacts with NOV. Interacts with TMEM65. Interacts with ANK3/ANKG and PKP2. In terms of processing, phosphorylation at Ser-325, Ser-328 and Ser-330 by CK1 modulates gap junction assembly. Phosphorylated at Ser-368 by PRKCG; phosphorylation induces disassembly of gap junction plaques and inhibition of gap junction activity. Phosphorylation at Ser-368 by PRKCD triggers its internalization into small vesicles leading to proteasome-mediated degradation. Post-translationally, sumoylated with SUMO1, SUMO2 and SUMO3, which may regulate the level of functional Cx43 gap junctions at the plasma membrane. May be desumoylated by SENP1 or SENP2. Acetylated in the developing cortex; leading to delocalization from the cell membrane. In terms of processing, S-nitrosylation at Cys-271 is enriched at the muscle endothelial gap junction in arteries, it augments channel permeability and may regulate of smooth muscle cell to endothelial cell communication. As to expression, expressed in heart, non-sensory epithelial cells, and in fibrocytes of the spiral ligament and the spiral limbus. Expressed in bladder smooth muscle cells (at protein level). Expressed in astrocytes (at protein level).

The protein localises to the cell membrane. It localises to the cell junction. The protein resides in the gap junction. It is found in the endoplasmic reticulum. In terms of biological role, gap junction protein that acts as a regulator of bladder capacity. A gap junction consists of a cluster of closely packed pairs of transmembrane channels, the connexons, through which materials of low MW diffuse from one cell to a neighboring cell. Negative regulator of bladder functional capacity: acts by enhancing intercellular electrical and chemical transmission, thus sensitizing bladder muscles to cholinergic neural stimuli and causing them to contract. May play a role in cell growth inhibition through the regulation of NOV expression and localization. Plays an essential role in gap junction communication in the ventricles. Its function is as follows. Connexin 43 is possibly the ATP-induced pore of mouse macrophages. This is Gap junction alpha-1 protein (Gja1) from Mus musculus (Mouse).